The sequence spans 89 residues: Sec-independent protein translocase protein TatA (89 aa).

Residues 1–21 form a helical membrane-spanning segment; it reads MFGLSPAQLIILLVVILLIFG.

This sequence belongs to the TatA/E family. In terms of assembly, the Tat system comprises two distinct complexes: a TatABC complex, containing multiple copies of TatA, TatB and TatC subunits, and a separate TatA complex, containing only TatA subunits. Substrates initially bind to the TatABC complex, which probably triggers association of the separate TatA complex to form the active translocon.

It localises to the cell inner membrane. Functionally, part of the twin-arginine translocation (Tat) system that transports large folded proteins containing a characteristic twin-arginine motif in their signal peptide across membranes. TatA could form the protein-conducting channel of the Tat system. The polypeptide is Sec-independent protein translocase protein TatA (Haemophilus influenzae (strain ATCC 51907 / DSM 11121 / KW20 / Rd)).